A 328-amino-acid polypeptide reads, in one-letter code: Alanine racemase (328 aa).

The Proton acceptor; specific for D-alanine role is filled by Lys33. Lys33 carries the N6-(pyridoxal phosphate)lysine modification. Arg118 is a binding site for substrate. The Proton acceptor; specific for L-alanine role is filled by Tyr237. Met283 is a substrate binding site.

Belongs to the alanine racemase family. Pyridoxal 5'-phosphate serves as cofactor.

The enzyme catalyses L-alanine = D-alanine. Its pathway is amino-acid biosynthesis; D-alanine biosynthesis; D-alanine from L-alanine: step 1/1. Catalyzes the interconversion of L-alanine and D-alanine. May also act on other amino acids. In Campylobacter jejuni subsp. jejuni serotype O:6 (strain 81116 / NCTC 11828), this protein is Alanine racemase (alr).